The following is a 263-amino-acid chain: Purine nucleoside phosphorylase SAV1187 (263 aa).

His79, Cys124, and His141 together coordinate Zn(2+).

Belongs to the purine nucleoside phosphorylase YfiH/LACC1 family. Homodimer. It depends on Cu(2+) as a cofactor. Zn(2+) serves as cofactor.

It catalyses the reaction adenosine + phosphate = alpha-D-ribose 1-phosphate + adenine. The catalysed reaction is S-methyl-5'-thioadenosine + phosphate = 5-(methylsulfanyl)-alpha-D-ribose 1-phosphate + adenine. The enzyme catalyses inosine + phosphate = alpha-D-ribose 1-phosphate + hypoxanthine. It carries out the reaction adenosine + H2O + H(+) = inosine + NH4(+). Functionally, purine nucleoside enzyme that catalyzes the phosphorolysis of adenosine and inosine nucleosides, yielding D-ribose 1-phosphate and the respective free bases, adenine and hypoxanthine. Also catalyzes the phosphorolysis of S-methyl-5'-thioadenosine into adenine and S-methyl-5-thio-alpha-D-ribose 1-phosphate. Also has adenosine deaminase activity. The chain is Purine nucleoside phosphorylase SAV1187 from Staphylococcus aureus (strain Mu50 / ATCC 700699).